The following is a 267-amino-acid chain: HTH-type transcriptional activator CsvR (267 aa).

2 consecutive DNA-binding regions (H-T-H motif) follow at residues 183–204 and 230–253; these read AIIADVFNVSEITIRKRLESED and ISQISNMIGISSASYFIRIFNKHF.

In terms of assembly, homodimer.

Transcriptional activator of fimbrial genes in enterotoxigenic E.coli. The protein is HTH-type transcriptional activator CsvR of Escherichia coli.